Here is a 316-residue protein sequence, read N- to C-terminus: HPr kinase/phosphorylase (316 aa).

Active-site residues include His143 and Lys164. Residue 158-165 (GEAGSGKS) participates in ATP binding. Ser165 lines the Mg(2+) pocket. The Proton acceptor; for phosphorylation activity. Proton donor; for dephosphorylation activity role is filled by Asp182. The important for the catalytic mechanism of both phosphorylation and dephosphorylation stretch occupies residues 206–215 (LEVRGLGVLN). Glu207 contacts Mg(2+). The active site involves Arg251. Residues 272 to 277 (PVMPGR) are important for the catalytic mechanism of dephosphorylation.

Belongs to the HPrK/P family. As to quaternary structure, homohexamer. Requires Mg(2+) as cofactor.

The enzyme catalyses [HPr protein]-L-serine + ATP = [HPr protein]-O-phospho-L-serine + ADP + H(+). It catalyses the reaction [HPr protein]-O-phospho-L-serine + phosphate + H(+) = [HPr protein]-L-serine + diphosphate. Catalyzes the ATP- as well as the pyrophosphate-dependent phosphorylation of a specific serine residue in HPr, a phosphocarrier protein of the phosphoenolpyruvate-dependent sugar phosphotransferase system (PTS). HprK/P also catalyzes the pyrophosphate-producing, inorganic phosphate-dependent dephosphorylation (phosphorolysis) of seryl-phosphorylated HPr (P-Ser-HPr). The polypeptide is HPr kinase/phosphorylase (Stenotrophomonas maltophilia (strain R551-3)).